The sequence spans 135 residues: Large-conductance mechanosensitive channel (135 aa).

Helical transmembrane passes span 10–30 and 76–96; these read FAMRGNVVDLAVGVIIGAAFG and GVFIQNVFDFVIVAFAIFLAI.

The protein belongs to the MscL family. As to quaternary structure, homopentamer.

It localises to the cell inner membrane. Functionally, channel that opens in response to stretch forces in the membrane lipid bilayer. May participate in the regulation of osmotic pressure changes within the cell. The chain is Large-conductance mechanosensitive channel from Cronobacter sakazakii (strain ATCC BAA-894) (Enterobacter sakazakii).